A 213-amino-acid chain; its full sequence is LexA repressor (213 aa).

The H-T-H motif DNA-binding region spans 27–47; the sequence is QTEIARAFGFKGIRAAQYHLE. Catalysis depends on for autocatalytic cleavage activity residues Ser-133 and Lys-170.

This sequence belongs to the peptidase S24 family. Homodimer.

It carries out the reaction Hydrolysis of Ala-|-Gly bond in repressor LexA.. In terms of biological role, represses a number of genes involved in the response to DNA damage (SOS response), including recA and lexA. Has been shown to bind to the palindromic sequence 5'-CTG-N(8-12)-C-[TC]-G. In the presence of single-stranded DNA, RecA interacts with LexA causing an autocatalytic cleavage which disrupts the DNA-binding part of LexA, leading to derepression of the SOS regulon and eventually DNA repair. The sequence is that of LexA repressor from Xanthomonas citri (Xanthomonas campestris pv. citri).